A 119-amino-acid chain; its full sequence is Protein Wnt-4 (119 aa).

Residue Ser-1 is the site of O-palmitoleoyl serine; by PORCN attachment. 2 disulfide bridges follow: Cys-69-Cys-100 and Cys-85-Cys-95. Asn-86 carries N-linked (GlcNAc...) asparagine glycosylation.

The protein belongs to the Wnt family. Palmitoleoylation is required for efficient binding to frizzled receptors. Depalmitoleoylation leads to Wnt signaling pathway inhibition.

The protein resides in the secreted. The protein localises to the extracellular space. It localises to the extracellular matrix. Functionally, ligand for members of the frizzled family of seven transmembrane receptors. Plays an important role in embryonic development. The polypeptide is Protein Wnt-4 (WNT4) (Meleagris gallopavo (Wild turkey)).